Consider the following 417-residue polypeptide: MTEYLSVSTLTKYLKAKFDRDRYLERVYLTGEISNFRRRPNHQYFALKDEGAVIQATMWAGQFRKLDFELEEGMKVLAVGRISIYPPSGSYSINIESLVPDGVGALAVKFEQLKKKLTAEGLFEQRWKQTLPQFSKKIAVVTSPSGAVIRDIITTVQRRFPMSQIVLYPTKVQGQGSAEEIAGNIRRANQRGDFDVMIIGRGGGSIEDLWGFNEEIVVRAIFESRIPIISSVGHETDVTLADFVADSRAATPTAAAELATPNTKVDLINWANEQEKRLFNRLTHVIKIRRERVDKLSQSVVFRQPERLYDGHLQKLDRLCERLSVLTENKVANMKHRYELSAGKLIPTYGKIVEAKKNKTEQLYQSLLLLDISKIKARGFSLVTDEKGKIIKSVSDVKKGQTLDVELTDGKVIVEVK.

Belongs to the XseA family. In terms of assembly, heterooligomer composed of large and small subunits.

It is found in the cytoplasm. The enzyme catalyses Exonucleolytic cleavage in either 5'- to 3'- or 3'- to 5'-direction to yield nucleoside 5'-phosphates.. In terms of biological role, bidirectionally degrades single-stranded DNA into large acid-insoluble oligonucleotides, which are then degraded further into small acid-soluble oligonucleotides. In Lactococcus lactis subsp. lactis (strain IL1403) (Streptococcus lactis), this protein is Exodeoxyribonuclease 7 large subunit.